Consider the following 67-residue polypeptide: Large ribosomal subunit protein uL29 (67 aa).

Belongs to the universal ribosomal protein uL29 family.

This chain is Large ribosomal subunit protein uL29, found in Clostridium acetobutylicum (strain ATCC 824 / DSM 792 / JCM 1419 / IAM 19013 / LMG 5710 / NBRC 13948 / NRRL B-527 / VKM B-1787 / 2291 / W).